A 456-amino-acid polypeptide reads, in one-letter code: Ribonuclease inhibitor (456 aa).

Methionine 1 carries the post-translational modification N-acetylmethionine. LRR repeat units follow at residues 15–43 (WTELLPLLQQYEVVRLDDCGLTEEHCKDI), 44–71 (GSALRANPSLTELCLRTNELGDAGVHLV), 72–100 (LQGLQSPTCKIQKLSLQNCSLTEAGCGVL), 101–128 (PSTLRSLPTLRELHLSDNPLGDAGLRLL), 129–157 (CEGLLDPQCHLEKLQLEYCRLTAASCEPL), 158–185 (ASVLRATRALKELTVSNNDIGEAGARVL), 186–214 (GQGLADSACQLETLRLENCGLTPANCKDL), 215–242 (CGIVASQASLRELDLGSNGLGDAGIAEL), 243–271 (CPGLLSPASRLKTLWLWECDITASGCRDL), 272–299 (CRVLQAKETLKELSLAGNKLGDEGARLL), 300–328 (CESLLQPGCQLESLWVKSCSLTAACCQHV), 329–356 (SLMLTQNKHLLELQLSSNKLGDSGIQEL), 357–385 (CQALSQPGTTLRVLCLGDCEVTNSGCSSL), 386–413 (ASLLLANRSLRELDLSNNCVGDPGVLQL), and 414–442 (LGSLEQPGCALEQLVLYDTYWTEEVEDRL). Residue serine 86 is modified to Phosphoserine.

In terms of assembly, forms high-affinity heterodimers with RNASE1, ANG and RNASE2.

It localises to the cytoplasm. The protein localises to the nucleus. Ribonuclease inhibitor which inhibits RNASE1, RNASE2 and angiogenin (ANG). May play a role in redox homeostasis. Required to inhibit the cytotoxic tRNA ribonuclease activity of ANG in the cytoplasm in absence of stress. Relocates to the nucleus in response to stress, relieving inhibition of ANG in the cytoplasm, and inhibiting the angiogenic activity of ANG in the nucleus. This is Ribonuclease inhibitor (RNH1) from Sus scrofa (Pig).